A 215-amino-acid polypeptide reads, in one-letter code: Probable maleylacetoacetate isomerase (215 aa).

Residues 2-85 (MSLILYGYWR…YLDETYPAPR (84 aa)) form the GST N-terminal domain. One can recognise a GST C-terminal domain in the interval 90–215 (RGAERYQVKA…AAPENQPDAC (126 aa)).

It belongs to the GST superfamily. Zeta family.

The catalysed reaction is 4-maleylacetoacetate = 4-fumarylacetoacetate. Its pathway is amino-acid degradation; L-phenylalanine degradation; acetoacetate and fumarate from L-phenylalanine: step 5/6. This chain is Probable maleylacetoacetate isomerase (maiA), found in Vibrio cholerae serotype O1 (strain ATCC 39315 / El Tor Inaba N16961).